The following is a 1530-amino-acid chain: Glutamate-rich protein 3 (1530 aa).

Disordered regions lie at residues Arg165–Ser187, Ser408–Gly429, Met475–Ile661, Thr673–Glu724, Glu773–Leu870, Arg923–Glu1146, Leu1167–Gly1334, Leu1360–Glu1383, and Tyr1425–Val1530. Basic and acidic residues-rich tracts occupy residues Glu415–Gly429, Leu531–Glu545, and Pro552–Asn562. Over residues Asp563–Lys574 the composition is skewed to acidic residues. Over residues Ser581 to Ser592 the composition is skewed to low complexity. Residues Val600 to Arg616 are compositionally biased toward basic and acidic residues. Residues Glu638–Gln647 are compositionally biased toward acidic residues. Composition is skewed to basic and acidic residues over residues Leu684–Ala717 and Glu773–Asp787. A compositionally biased stretch (low complexity) spans Gly834–Ala845. A compositionally biased stretch (acidic residues) spans Gly943–Pro958. Basic and acidic residues-rich tracts occupy residues Glu979–Thr992, Glu1039–Lys1116, and Leu1173–Gly1212. The segment covering Glu1213–Gly1225 has biased composition (low complexity). The span at Ala1289–Lys1300 shows a compositional bias: acidic residues. 2 stretches are compositionally biased toward basic and acidic residues: residues Gly1464 to Ser1487 and Asp1502 to Gln1511. Over residues Glu1517–Val1530 the composition is skewed to polar residues.

In terms of assembly, interacts with CLTC/clathrin heavy chain 1, AP2A2/AP-2 complex subunit alpha-2, and PIK3C2A/phosphatidylinositol 4-phosphate 3-kinase C2 domain-containing subunit alpha. In terms of tissue distribution, expressed in dopaminergic and serotoninergic neurons.

It is found in the cell projection. Its subcellular location is the cilium. It localises to the cytoplasm. Its function is as follows. Component of the primary cilium that controls cilium formation and length. May function within retrograde intraflagellar transport (IFT)-associated pathways to remove signaling proteins from primary cilia. Also involved in neuronal vesicle biogenesis and neurotransmitter vesicular function. This chain is Glutamate-rich protein 3, found in Homo sapiens (Human).